Reading from the N-terminus, the 284-residue chain is Four and a half LIM domains protein 5 (284 aa).

The C4-type zinc-finger motif lies at 8–32 (CQYCTASLLGKKYVLKDDSPYCVTC). 4 consecutive LIM zinc-binding domains span residues 39 to 100 (NYCE…ECSS), 101 to 160 (KCFH…KEFA), 161 to 220 (HYCN…LYAN), and 223 to 283 (VACS…MDTD).

Interacts with CREM (via the third LIM domain). Interacts (via second LIM domain) with SPAG8. Testis-specific (at protein level).

It localises to the nucleus. In terms of biological role, may be involved in the regulation of spermatogenesis. Stimulates CREM transcriptional activity in a phosphorylation-independent manner. This Homo sapiens (Human) protein is Four and a half LIM domains protein 5 (FHL5).